The primary structure comprises 458 residues: Transcription factor PCF5 (458 aa).

Disordered stretches follow at residues 1 to 103 (MGDA…RGPR), 159 to 182 (GAGAGNAAAPPSSSTHPDSAENSD), 278 to 299 (MFHHQQHRHGGGGGGGNGTTQQ), and 424 to 458 (RLPARIQGDEEHNGGGGGNGDKPPPPSSVSSASHH). Residues 65–74 (RGGGGGGGGE) are compositionally biased toward gly residues. Residues 89-147 (RKDRHSKVCTARGPRDRRVRLSAHTAIQFYDVQDRLGYDRPSKAVDWLIKNAKDAIDKL) form the TCP domain.

As to quaternary structure, forms homodimers and heterodimers.

It is found in the nucleus. Functionally, transcription activator. Binds the promoter core sequence 5'-GGNCC-3'. This chain is Transcription factor PCF5 (PCF5), found in Oryza sativa subsp. japonica (Rice).